Reading from the N-terminus, the 360-residue chain is UDP-3-O-acylglucosamine N-acyltransferase (360 aa).

Residue His-248 is the Proton acceptor of the active site.

The protein belongs to the transferase hexapeptide repeat family. LpxD subfamily. In terms of assembly, homotrimer.

It catalyses the reaction a UDP-3-O-[(3R)-3-hydroxyacyl]-alpha-D-glucosamine + a (3R)-hydroxyacyl-[ACP] = a UDP-2-N,3-O-bis[(3R)-3-hydroxyacyl]-alpha-D-glucosamine + holo-[ACP] + H(+). The protein operates within bacterial outer membrane biogenesis; LPS lipid A biosynthesis. In terms of biological role, catalyzes the N-acylation of UDP-3-O-acylglucosamine using 3-hydroxyacyl-ACP as the acyl donor. Is involved in the biosynthesis of lipid A, a phosphorylated glycolipid that anchors the lipopolysaccharide to the outer membrane of the cell. The protein is UDP-3-O-acylglucosamine N-acyltransferase of Chlamydia pneumoniae (Chlamydophila pneumoniae).